Reading from the N-terminus, the 358-residue chain is DNA replication and repair protein RecF (358 aa).

33–40 is an ATP binding site; that stretch reads GENGAGKT.

The protein belongs to the RecF family.

Its subcellular location is the cytoplasm. Functionally, the RecF protein is involved in DNA metabolism; it is required for DNA replication and normal SOS inducibility. RecF binds preferentially to single-stranded, linear DNA. It also seems to bind ATP. This chain is DNA replication and repair protein RecF, found in Deinococcus geothermalis (strain DSM 11300 / CIP 105573 / AG-3a).